The chain runs to 50 residues: U3-ctenitoxin-Asp1a (50 aa).

As to expression, expressed by the venom gland.

The protein resides in the secreted. Its function is as follows. Possible neurotoxin. The polypeptide is U3-ctenitoxin-Asp1a (Ancylometes sp. (South American fishing spider)).